Reading from the N-terminus, the 434-residue chain is Enolase (434 aa).

A (2R)-2-phosphoglycerate-binding site is contributed by Gln165. Catalysis depends on Glu207, which acts as the Proton donor. The Mg(2+) site is built by Asp244, Glu291, and Asp318. The (2R)-2-phosphoglycerate site is built by Lys343, Arg372, Ser373, and Lys394. Catalysis depends on Lys343, which acts as the Proton acceptor.

Belongs to the enolase family. It depends on Mg(2+) as a cofactor.

Its subcellular location is the cytoplasm. It localises to the secreted. It is found in the cell surface. It catalyses the reaction (2R)-2-phosphoglycerate = phosphoenolpyruvate + H2O. The protein operates within carbohydrate degradation; glycolysis; pyruvate from D-glyceraldehyde 3-phosphate: step 4/5. Functionally, catalyzes the reversible conversion of 2-phosphoglycerate (2-PG) into phosphoenolpyruvate (PEP). It is essential for the degradation of carbohydrates via glycolysis. The protein is Enolase of Staphylococcus haemolyticus (strain JCSC1435).